The primary structure comprises 520 residues: Hydroxymethylglutaryl-CoA synthase, cytoplasmic (520 aa).

Ser-4 carries the phosphoserine modification. Ala-44 serves as a coordination point for (3S)-3-hydroxy-3-methylglutaryl-CoA. 44 to 46 (AGK) provides a ligand contact to CoA. An N6-acetyllysine modification is found at Lys-46. The Proton donor/acceptor role is filled by Glu-95. (3S)-3-hydroxy-3-methylglutaryl-CoA is bound by residues Cys-129, Asn-167, Thr-171, Ser-221, and His-264. The active-site Acyl-thioester intermediate is Cys-129. Position 167 (Asn-167) interacts with CoA. Residue Ser-221 participates in CoA binding. His-264 functions as the Proton donor/acceptor in the catalytic mechanism. Residues Lys-269 and Lys-273 each contribute to the CoA site. Positions 273, 343, and 377 each coordinate (3S)-3-hydroxy-3-methylglutaryl-CoA. The residue at position 273 (Lys-273) is an N6-acetyllysine. Residue Thr-476 is modified to Phosphothreonine. The tract at residues 492-520 (HIPSPAKKVPRLPATAAEPEAAVISNGEH) is disordered. Residues Ser-495 and Ser-516 each carry the phosphoserine modification.

It belongs to the thiolase-like superfamily. HMG-CoA synthase family. Homodimer.

It is found in the cytoplasm. It catalyses the reaction acetoacetyl-CoA + acetyl-CoA + H2O = (3S)-3-hydroxy-3-methylglutaryl-CoA + CoA + H(+). It participates in metabolic intermediate biosynthesis; (R)-mevalonate biosynthesis; (R)-mevalonate from acetyl-CoA: step 2/3. Catalyzes the condensation of acetyl-CoA with acetoacetyl-CoA to form HMG-CoA, which is converted by HMG-CoA reductase (HMGCR) into mevalonate, a precursor for cholesterol synthesis. This chain is Hydroxymethylglutaryl-CoA synthase, cytoplasmic, found in Pongo abelii (Sumatran orangutan).